Reading from the N-terminus, the 178-residue chain is uncharacterized protein (178 aa).

Helical transmembrane passes span 13 to 33 (GIVLTLTVLINGLIAVLFFMP), 48 to 68 (MLNAIFNSFTFIFLLAALIMI), 80 to 100 (ILAAFTTTLLFLICYVTYHSI), 115 to 135 (IYFFILITHICLSAIIVPLAL), and 155 to 175 (WTMPLWLYVSLTGVIVYLMIS).

Its subcellular location is the cell membrane. This is an uncharacterized protein from Bacillus subtilis (strain 168).